Here is a 295-residue protein sequence, read N- to C-terminus: Acetyl-coenzyme A carboxylase carboxyl transferase subunit beta (295 aa).

Positions 1 to 20 (MSWLSKLMPSGIRTENTPAK) are disordered. One can recognise a CoA carboxyltransferase N-terminal domain in the interval 28-295 (LWEKCSNCGS…QPHPQDADAA (268 aa)). Zn(2+)-binding residues include Cys-32, Cys-35, Cys-51, and Cys-54. The C4-type zinc-finger motif lies at 32–54 (CSNCGSALYGPELEENLEVCPKC).

The protein belongs to the AccD/PCCB family. Acetyl-CoA carboxylase is a heterohexamer composed of biotin carboxyl carrier protein (AccB), biotin carboxylase (AccC) and two subunits each of ACCase subunit alpha (AccA) and ACCase subunit beta (AccD). The cofactor is Zn(2+).

The protein resides in the cytoplasm. The catalysed reaction is N(6)-carboxybiotinyl-L-lysyl-[protein] + acetyl-CoA = N(6)-biotinyl-L-lysyl-[protein] + malonyl-CoA. The protein operates within lipid metabolism; malonyl-CoA biosynthesis; malonyl-CoA from acetyl-CoA: step 1/1. Component of the acetyl coenzyme A carboxylase (ACC) complex. Biotin carboxylase (BC) catalyzes the carboxylation of biotin on its carrier protein (BCCP) and then the CO(2) group is transferred by the transcarboxylase to acetyl-CoA to form malonyl-CoA. The polypeptide is Acetyl-coenzyme A carboxylase carboxyl transferase subunit beta (Xanthomonas campestris pv. campestris (strain 8004)).